We begin with the raw amino-acid sequence, 400 residues long: Phosphoglycerate kinase (400 aa).

Residues 21–23, R36, 59–62, R118, and R151 each bind substrate; these read DFN and HCSR. ATP-binding positions include K201, E323, and 353-356; that span reads GGDT.

Belongs to the phosphoglycerate kinase family. Monomer.

It is found in the cytoplasm. It carries out the reaction (2R)-3-phosphoglycerate + ATP = (2R)-3-phospho-glyceroyl phosphate + ADP. It participates in carbohydrate degradation; glycolysis; pyruvate from D-glyceraldehyde 3-phosphate: step 2/5. In Bartonella bacilliformis (strain ATCC 35685 / KC583 / Herrer 020/F12,63), this protein is Phosphoglycerate kinase.